We begin with the raw amino-acid sequence, 201 residues long: Large ribosomal subunit protein uL4 (201 aa).

The segment at 45–66 is disordered; sequence AQLTRSEVSGGGKKPWRQKGTG.

It belongs to the universal ribosomal protein uL4 family. In terms of assembly, part of the 50S ribosomal subunit.

Its function is as follows. One of the primary rRNA binding proteins, this protein initially binds near the 5'-end of the 23S rRNA. It is important during the early stages of 50S assembly. It makes multiple contacts with different domains of the 23S rRNA in the assembled 50S subunit and ribosome. Forms part of the polypeptide exit tunnel. This Aeromonas hydrophila subsp. hydrophila (strain ATCC 7966 / DSM 30187 / BCRC 13018 / CCUG 14551 / JCM 1027 / KCTC 2358 / NCIMB 9240 / NCTC 8049) protein is Large ribosomal subunit protein uL4.